A 526-amino-acid polypeptide reads, in one-letter code: Beta,beta-carotene 15,15'-dioxygenase (526 aa).

Fe cation is bound by residues His172, His236, His307, and His512.

This sequence belongs to the carotenoid oxygenase family. Requires Fe(2+) as cofactor.

It is found in the cytoplasm. Its subcellular location is the cytosol. The catalysed reaction is all-trans-beta-carotene + O2 = 2 all-trans-retinal. The protein operates within cofactor metabolism; retinol metabolism. In terms of biological role, symmetrically cleaves beta-carotene into two molecules of retinal using a dioxygenase mechanism. This is Beta,beta-carotene 15,15'-dioxygenase from Gallus gallus (Chicken).